Reading from the N-terminus, the 283-residue chain is 4-diphosphocytidyl-2-C-methyl-D-erythritol kinase (283 aa).

Residue K11 is part of the active site. 94 to 104 is a binding site for ATP; sequence PVAAGLAGGSA. D136 is an active-site residue.

This sequence belongs to the GHMP kinase family. IspE subfamily.

The catalysed reaction is 4-CDP-2-C-methyl-D-erythritol + ATP = 4-CDP-2-C-methyl-D-erythritol 2-phosphate + ADP + H(+). It functions in the pathway isoprenoid biosynthesis; isopentenyl diphosphate biosynthesis via DXP pathway; isopentenyl diphosphate from 1-deoxy-D-xylulose 5-phosphate: step 3/6. Its function is as follows. Catalyzes the phosphorylation of the position 2 hydroxy group of 4-diphosphocytidyl-2C-methyl-D-erythritol. In Acetivibrio thermocellus (strain ATCC 27405 / DSM 1237 / JCM 9322 / NBRC 103400 / NCIMB 10682 / NRRL B-4536 / VPI 7372) (Clostridium thermocellum), this protein is 4-diphosphocytidyl-2-C-methyl-D-erythritol kinase.